Here is a 66-residue protein sequence, read N- to C-terminus: uncharacterized protein (66 aa).

This is an uncharacterized protein from Vaccinia virus (strain Copenhagen) (VACV).